The chain runs to 582 residues: tRNA-guanine(15) transglycosylase (582 aa).

D95 (nucleophile) is an active-site residue. Substrate contacts are provided by D130 and G196. Positions 279, 281, and 284 each coordinate Zn(2+). The 76-residue stretch at 507-582 (RMRVVVNKEA…RAVKVRKGVE (76 aa)) folds into the PUA domain.

This sequence belongs to the archaeosine tRNA-ribosyltransferase family. As to quaternary structure, homodimer. Requires Zn(2+) as cofactor.

It carries out the reaction guanosine(15) in tRNA + 7-cyano-7-deazaguanine = 7-cyano-7-carbaguanosine(15) in tRNA + guanine. It functions in the pathway tRNA modification; archaeosine-tRNA biosynthesis. In terms of biological role, exchanges the guanine residue with 7-cyano-7-deazaguanine (preQ0) at position 15 in the dihydrouridine loop (D-loop) of archaeal tRNAs. The polypeptide is tRNA-guanine(15) transglycosylase (tgtA) (Pyrococcus horikoshii (strain ATCC 700860 / DSM 12428 / JCM 9974 / NBRC 100139 / OT-3)).